A 647-amino-acid chain; its full sequence is Macrolide export ATP-binding/permease protein MacB (647 aa).

In terms of domain architecture, ABC transporter spans 7–245; the sequence is IRLEDICKTF…EATLQPHEEI (239 aa). Position 43 to 50 (43 to 50) interacts with ATP; sequence GASGSGKS. The next 4 helical transmembrane spans lie at 274–294, 529–549, 573–593, and 610–630; these read VLTL…LAIG, VAAI…LVSV, FIIE…ILGL, and FGPV…FGFL.

It belongs to the ABC transporter superfamily. Macrolide exporter (TC 3.A.1.122) family. As to quaternary structure, homodimer.

Its subcellular location is the cell inner membrane. Functionally, non-canonical ABC transporter that contains transmembrane domains (TMD), which form a pore in the inner membrane, and an ATP-binding domain (NBD), which is responsible for energy generation. Confers resistance against macrolides. The protein is Macrolide export ATP-binding/permease protein MacB of Brucella melitensis biotype 1 (strain ATCC 23456 / CCUG 17765 / NCTC 10094 / 16M).